The chain runs to 746 residues: Exostosin-1 (746 aa).

The Cytoplasmic segment spans residues 1-7 (MQAKKRY). The chain crosses the membrane as a helical; Signal-anchor for type II membrane protein span at residues 8–28 (FILLSAGSCLALLFYFGGLQF). Over 29–746 (RASRSHSRRE…RKKYRDIERL (718 aa)) the chain is Lumenal. N-linked (GlcNAc...) asparagine glycosylation occurs at asparagine 89. Intrachain disulfides connect cysteine 98–cysteine 103 and cysteine 109–cysteine 152. Residues leucine 166 and tyrosine 203 each contribute to the a protein site. Residues lysine 267, lysine 269, tyrosine 271, and arginine 280 each contribute to the UDP site. Cysteine 298 and cysteine 312 are oxidised to a cystine. An a protein-binding site is contributed by histidine 300. Positions 319 and 324 each coordinate UDP. Asparagine 330 is a glycosylation site (N-linked (GlcNAc...) asparagine). Cystine bridges form between cysteine 334–cysteine 355 and cysteine 652–cysteine 704. UDP-binding residues include arginine 346 and glutamate 349.

It belongs to the glycosyltransferase 47 family. In terms of assembly, part of the heparan sulfate polymerase, a dimeric complex composed of EXT1 and EXT2. Could also form homooligomeric complexes. Interacts with NDST1. Post-translationally, N-glycosylated.

It localises to the golgi apparatus membrane. It is found in the golgi apparatus. The protein resides in the cis-Golgi network membrane. The protein localises to the endoplasmic reticulum membrane. The catalysed reaction is 3-O-{alpha-D-GlcNAc-[(1-&gt;4)-beta-D-GlcA-(1-&gt;4)-alpha-D-GlcNAc](n)-(1-&gt;4)-beta-D-GlcA-(1-&gt;3)-beta-D-Gal-(1-&gt;3)-beta-D-Gal-(1-&gt;4)-beta-D-Xyl}-L-seryl-[protein] + UDP-alpha-D-glucuronate = 3-O-{[(1-&gt;4)-beta-D-GlcA-(1-&gt;4)-alpha-D-GlcNAc](n+1)-(1-&gt;4)-beta-D-GlcA-(1-&gt;3)-beta-D-Gal-(1-&gt;3)-beta-D-Gal-(1-&gt;4)-beta-D-Xyl}-L-seryl-[protein] + UDP + H(+). Its pathway is protein modification; protein glycosylation. Glycosyltransferase forming with EXT2 the heterodimeric heparan sulfate polymerase which catalyzes the elongation of the heparan sulfate glycan backbone. Glycan backbone extension consists in the alternating transfer of (1-&gt;4)-beta-D-GlcA and (1-&gt;4)-alpha-D-GlcNAc residues from their respective UDP-sugar donors. Both EXT1 and EXT2 are required for the full activity of the polymerase since EXT1 bears the N-acetylglucosaminyl-proteoglycan 4-beta-glucuronosyltransferase activity within the complex while EXT2 carries the glucuronosyl-N-acetylglucosaminyl-proteoglycan 4-alpha-N-acetylglucosaminyltransferase activity. Heparan sulfate proteoglycans are ubiquitous components of the extracellular matrix and play an important role in tissue homeostasis and signaling. This is Exostosin-1 (EXT1) from Bos taurus (Bovine).